Here is a 141-residue protein sequence, read N- to C-terminus: Putative pre-16S rRNA nuclease (141 aa).

Belongs to the YqgF nuclease family.

It localises to the cytoplasm. Its function is as follows. Could be a nuclease involved in processing of the 5'-end of pre-16S rRNA. This Coxiella burnetii (strain CbuG_Q212) (Coxiella burnetii (strain Q212)) protein is Putative pre-16S rRNA nuclease.